The chain runs to 505 residues: MSVELWQQCVELLRDELPAQQFNTWIRPLQVEAEGDELRVYAPNRFVLDWVNEKYLGRLLELLGENGSGIAPALSLLIGSRRSSAPRAAPNAPVSAAVAASLAQTQAHKTAPAAAVEPVAVAAAEPVLVETSSRDSFDAMAEPAAAPPSGGRAEQRTVQVEGALKHTSYLNRTFTFDTFVEGKSNQLARAAAWQVADNPKHGYNPLFLYGGVGLGKTHLMHAVGNHLLKKNPNAKVVYLHSERFVADMVKALQLNAINEFKRFYRSVDALLIDDIQFFARKERSQEEFFHTFNALLEGGQQVILTSDRYPKEIEGLEERLKSRFGWGLTVAVEPPELETRVAILMKKADQAKVELPHDAAFFIAQRIRSNVRELEGALKRVIAHSHFMGRDITIELIRESLKDLLALQDKLVSVDNIQRTVAEYYKIKISDLLSKRRSRSVARPRQVAMALSKELTNHSLPEIGDMFGGRDHTTVLHACRKINELKESDADIREDYKNLLRTLTT.

The segment at 1-90 is domain I, interacts with DnaA modulators; it reads MSVELWQQCV…RRSSAPRAAP (90 aa). The tract at residues 91 to 168 is domain II; that stretch reads NAPVSAAVAA…QVEGALKHTS (78 aa). A domain III, AAA+ region region spans residues 169-385; the sequence is YLNRTFTFDT…GALKRVIAHS (217 aa). ATP-binding residues include Gly213, Gly215, Lys216, and Thr217. The interval 386–505 is domain IV, binds dsDNA; it reads HFMGRDITIE…YKNLLRTLTT (120 aa).

Belongs to the DnaA family. Oligomerizes as a right-handed, spiral filament on DNA at oriC.

It is found in the cytoplasm. In terms of biological role, plays an essential role in the initiation and regulation of chromosomal replication. ATP-DnaA binds to the origin of replication (oriC) to initiate formation of the DNA replication initiation complex once per cell cycle. Binds the DnaA box (a 9 base pair repeat at the origin) and separates the double-stranded (ds)DNA. Forms a right-handed helical filament on oriC DNA; dsDNA binds to the exterior of the filament while single-stranded (ss)DNA is stabiized in the filament's interior. The ATP-DnaA-oriC complex binds and stabilizes one strand of the AT-rich DNA unwinding element (DUE), permitting loading of DNA polymerase. After initiation quickly degrades to an ADP-DnaA complex that is not apt for DNA replication. Binds acidic phospholipids. The sequence is that of Chromosomal replication initiator protein DnaA from Pseudomonas putida (strain ATCC 700007 / DSM 6899 / JCM 31910 / BCRC 17059 / LMG 24140 / F1).